The chain runs to 274 residues: 2,3,4,5-tetrahydropyridine-2,6-dicarboxylate N-succinyltransferase (274 aa).

The protein belongs to the transferase hexapeptide repeat family.

The protein resides in the cytoplasm. It carries out the reaction (S)-2,3,4,5-tetrahydrodipicolinate + succinyl-CoA + H2O = (S)-2-succinylamino-6-oxoheptanedioate + CoA. It participates in amino-acid biosynthesis; L-lysine biosynthesis via DAP pathway; LL-2,6-diaminopimelate from (S)-tetrahydrodipicolinate (succinylase route): step 1/3. This is 2,3,4,5-tetrahydropyridine-2,6-dicarboxylate N-succinyltransferase from Escherichia fergusonii (strain ATCC 35469 / DSM 13698 / CCUG 18766 / IAM 14443 / JCM 21226 / LMG 7866 / NBRC 102419 / NCTC 12128 / CDC 0568-73).